The following is a 476-amino-acid chain: Adenosylhomocysteinase (476 aa).

Substrate is bound by residues Thr-62, Asp-141, and Glu-201. 202–204 (TTT) contacts NAD(+). Positions 231 and 235 each coordinate substrate. Residues Asn-236, 265 to 270 (GYGDVG), Glu-288, Asn-323, 344 to 346 (IGH), and Asn-389 contribute to the NAD(+) site.

This sequence belongs to the adenosylhomocysteinase family. It depends on NAD(+) as a cofactor.

The protein resides in the cytoplasm. It catalyses the reaction S-adenosyl-L-homocysteine + H2O = L-homocysteine + adenosine. The protein operates within amino-acid biosynthesis; L-homocysteine biosynthesis; L-homocysteine from S-adenosyl-L-homocysteine: step 1/1. Its function is as follows. May play a key role in the regulation of the intracellular concentration of adenosylhomocysteine. This Myxococcus xanthus (strain DK1622) protein is Adenosylhomocysteinase.